Here is an 836-residue protein sequence, read N- to C-terminus: Enhancer of polycomb homolog 1 (836 aa).

Lys-319 is covalently cross-linked (Glycyl lysine isopeptide (Lys-Gly) (interchain with G-Cter in SUMO2)). Disordered stretches follow at residues 335-360 (KRKYEKKPKVLPSSAAATPQQTSPAA) and 372-401 (YDFPSSDEEPLSQVLSGSSEAEEDNDPDGP). A compositionally biased stretch (low complexity) spans 346 to 360 (PSSAAATPQQTSPAA). Ser-539 carries the post-translational modification Phosphoserine. Lys-673 is covalently cross-linked (Glycyl lysine isopeptide (Lys-Gly) (interchain with G-Cter in SUMO2)). A disordered region spans residues 802-829 (VPSSSSVDSVPRENHESEKPALNNIADN). The span at 811-820 (VPRENHESEK) shows a compositional bias: basic and acidic residues.

It belongs to the enhancer of polycomb family. In terms of assembly, component of the NuA4 histone acetyltransferase complex which contains the catalytic subunit KAT5/TIP60 and the subunits EP400, TRRAP/PAF400, BRD8/SMAP, EPC1, DMAP1/DNMAP1, RUVBL1/TIP49, RUVBL2, ING3, actin, ACTL6A/BAF53A, MORF4L1/MRG15, MORF4L2/MRGX, MRGBP, YEATS4/GAS41, VPS72/YL1 and MEAF6. KAT5/TIP60, EPC1, and ING3 together constitute a minimal HAT complex termed Piccolo NuA4. Component of a NuA4-related complex which contains EP400, TRRAP/PAF400, SRCAP, BRD8/SMAP, EPC1, DMAP1/DNMAP1, RUVBL1/TIP49, RUVBL2, actin, ACTL6A/BAF53A, VPS72 and YEATS4/GAS41. Interacts with TRIM27. Interacts with MBTD1; interaction is direct and promotes recruitment of MBTD1 into the NuA4 histone acetyltransferase complex.

It is found in the nucleus. The protein localises to the cytoplasm. Component of the NuA4 histone acetyltransferase (HAT) complex, a multiprotein complex involved in transcriptional activation of select genes principally by acetylation of nucleosomal histones H4 and H2A. The NuA4 complex plays a direct role in repair of DNA double-strand breaks (DSBs) by promoting homologous recombination (HR). The NuA4 complex is also required for spermatid development by promoting acetylation of histones: histone acetylation is required for histone replacement during the transition from round to elongating spermatids. In the NuA4 complex, EPC1 is required to recruit MBTD1 into the complex. The protein is Enhancer of polycomb homolog 1 of Homo sapiens (Human).